The primary structure comprises 523 residues: Tubulin-specific chaperone E (523 aa).

Positions 31-75 (GEVSGHMGSWLGIEWDDGLRGKHNGIVDGKRYFQTQTPTGGSFIR) constitute a CAP-Gly domain. 7 LRR repeats span residues 155–180 (LTHLTTLNVSHTLIWNWEIVASIAQQ), 181–204 (LPSLTNLNLSSNRLVLPTSSQITE), 209–232 (FRQLKRINLRSCGFSDWKDVMHTA), 235–258 (WPNILSLGLQENSLGQLAEVDRTK), 260–284 (FKQLHELDLHRTNIMDFDQVTKLGN), 285–310 (LTTLRLLNIMENGIEEIKLPDCDSQE), and 315–337 (FVSLEQLNLLHNPIWNEADAFNE).

Belongs to the TBCE family.

The protein localises to the cytoplasm. In terms of biological role, tubulin-folding protein which is required for the development of the neuronal microtubule network. Essential for the development and function of neuromuscular synapses. Likely to promote microtubule formation by acting in the negative regulation of the microtubule-severing protein spas. This chain is Tubulin-specific chaperone E, found in Drosophila melanogaster (Fruit fly).